We begin with the raw amino-acid sequence, 217 residues long: Probable transaldolase (217 aa).

Catalysis depends on K83, which acts as the Schiff-base intermediate with substrate.

This sequence belongs to the transaldolase family. Type 3B subfamily.

The protein resides in the cytoplasm. The catalysed reaction is D-sedoheptulose 7-phosphate + D-glyceraldehyde 3-phosphate = D-erythrose 4-phosphate + beta-D-fructose 6-phosphate. It functions in the pathway carbohydrate degradation; pentose phosphate pathway; D-glyceraldehyde 3-phosphate and beta-D-fructose 6-phosphate from D-ribose 5-phosphate and D-xylulose 5-phosphate (non-oxidative stage): step 2/3. Functionally, transaldolase is important for the balance of metabolites in the pentose-phosphate pathway. The sequence is that of Probable transaldolase from Jannaschia sp. (strain CCS1).